We begin with the raw amino-acid sequence, 223 residues long: Deoxyribose-phosphate aldolase (223 aa).

D89 (proton donor/acceptor) is an active-site residue. The Schiff-base intermediate with acetaldehyde role is filled by K152. Residue K181 is the Proton donor/acceptor of the active site.

It belongs to the DeoC/FbaB aldolase family. DeoC type 1 subfamily.

The protein resides in the cytoplasm. The enzyme catalyses 2-deoxy-D-ribose 5-phosphate = D-glyceraldehyde 3-phosphate + acetaldehyde. The protein operates within carbohydrate degradation; 2-deoxy-D-ribose 1-phosphate degradation; D-glyceraldehyde 3-phosphate and acetaldehyde from 2-deoxy-alpha-D-ribose 1-phosphate: step 2/2. Catalyzes a reversible aldol reaction between acetaldehyde and D-glyceraldehyde 3-phosphate to generate 2-deoxy-D-ribose 5-phosphate. This chain is Deoxyribose-phosphate aldolase, found in Bacillus cereus (strain Q1).